Reading from the N-terminus, the 722-residue chain is Dual specificity tyrosine-phosphorylation-regulated kinase 2 (722 aa).

At serine 25 the chain carries Phosphoserine. The interval 54–127 (TTTSLNGNGN…SGELKCNTPM (74 aa)) is disordered. The span at 66–119 (GNSNSNNNNNIGSPVSSSTTNSSNGGNERGSSTKSNSSSGSGSSGNSASSTGSG) shows a compositional bias: low complexity. In terms of domain architecture, Protein kinase spans 198–494 (YEILEVIGKG…PDEAAHHEFL (297 aa)). Residues 204-212 (IGKGSFGQV) and lysine 227 contribute to the ATP site. The Proton acceptor role is filled by aspartate 324. Phosphotyrosine; by autocatalysis occurs at positions 356 and 358. Disordered regions lie at residues 494 to 519 (LQPS…LNSV), 557 to 582 (TTKS…PDIK), 624 to 643 (GSGS…LPGT), and 679 to 722 (TTTH…FGRA). Over residues 506-519 (RMSSSSSSSGLNSV) the composition is skewed to low complexity. The span at 557–576 (TTKSRQQPPSQSHGHAQSNG) shows a compositional bias: polar residues. Composition is skewed to low complexity over residues 626–635 (GSTHHVSSAA) and 689–707 (GQQQ…MSHS).

The protein belongs to the protein kinase superfamily. CMGC Ser/Thr protein kinase family. MNB/DYRK subfamily. Mg(2+) serves as cofactor. Phosphorylated on serine/threonine residues.

The protein localises to the cytoplasm. The catalysed reaction is L-seryl-[protein] + ATP = O-phospho-L-seryl-[protein] + ADP + H(+). It carries out the reaction L-threonyl-[protein] + ATP = O-phospho-L-threonyl-[protein] + ADP + H(+). The enzyme catalyses L-tyrosyl-[protein] + ATP = O-phospho-L-tyrosyl-[protein] + ADP + H(+). Its activity is regulated as follows. Autophosphorylates on Tyr-356 and Tyr-358. In vitro; can phosphorylate exogenous substrates on Ser and Thr residues. May have a physiological role in development being involved in cellular growth and differentiation. This is Dual specificity tyrosine-phosphorylation-regulated kinase 2 from Drosophila melanogaster (Fruit fly).